The following is an 87-amino-acid chain: Small ribosomal subunit protein uS15c (87 aa).

It belongs to the universal ribosomal protein uS15 family. Part of the 30S ribosomal subunit.

It is found in the plastid. The protein resides in the chloroplast. The protein is Small ribosomal subunit protein uS15c (rps15) of Oenothera biennis (German evening primrose).